The primary structure comprises 256 residues: Protein crossbronx-like (256 aa).

The 163-residue stretch at 17–179 (NQGYQVLAEY…AKASIVWSWK (163 aa)) folds into the UBC core domain.

It belongs to the ubiquitin-conjugating enzyme family. FTS subfamily.

In Drosophila mojavensis (Fruit fly), this protein is Protein crossbronx-like.